Reading from the N-terminus, the 395-residue chain is Succinyl-diaminopimelate desuccinylase (395 aa).

Residue His-74 coordinates Zn(2+). Asp-76 is a catalytic residue. Asp-107 contacts Zn(2+). Catalysis depends on Glu-141, which acts as the Proton acceptor. 3 residues coordinate Zn(2+): Glu-142, Glu-170, and His-368.

Belongs to the peptidase M20A family. DapE subfamily. In terms of assembly, homodimer. Zn(2+) is required as a cofactor. The cofactor is Co(2+).

It catalyses the reaction N-succinyl-(2S,6S)-2,6-diaminopimelate + H2O = (2S,6S)-2,6-diaminopimelate + succinate. It functions in the pathway amino-acid biosynthesis; L-lysine biosynthesis via DAP pathway; LL-2,6-diaminopimelate from (S)-tetrahydrodipicolinate (succinylase route): step 3/3. Catalyzes the hydrolysis of N-succinyl-L,L-diaminopimelic acid (SDAP), forming succinate and LL-2,6-diaminopimelate (DAP), an intermediate involved in the bacterial biosynthesis of lysine and meso-diaminopimelic acid, an essential component of bacterial cell walls. In Brucella canis (strain ATCC 23365 / NCTC 10854 / RM-666), this protein is Succinyl-diaminopimelate desuccinylase.